The sequence spans 538 residues: Phosphoenolpyruvate carboxykinase (ATP) (538 aa).

The substrate site is built by Arg-64, Tyr-205, and Lys-211. Residues Lys-211, His-230, and 246-254 (GLSGTGKTT) each bind ATP. Mn(2+)-binding residues include Lys-211 and His-230. Asp-267 provides a ligand contact to Mn(2+). ATP-binding positions include Glu-295, Arg-331, 447 to 448 (RI), and Thr-453. Arg-331 provides a ligand contact to substrate.

The protein belongs to the phosphoenolpyruvate carboxykinase (ATP) family. As to quaternary structure, monomer. It depends on Mn(2+) as a cofactor.

It is found in the cytoplasm. It carries out the reaction oxaloacetate + ATP = phosphoenolpyruvate + ADP + CO2. The protein operates within carbohydrate biosynthesis; gluconeogenesis. Functionally, involved in the gluconeogenesis. Catalyzes the conversion of oxaloacetate (OAA) to phosphoenolpyruvate (PEP) through direct phosphoryl transfer between the nucleoside triphosphate and OAA. The chain is Phosphoenolpyruvate carboxykinase (ATP) from Haemophilus influenzae (strain ATCC 51907 / DSM 11121 / KW20 / Rd).